Here is a 308-residue protein sequence, read N- to C-terminus: Protease HtpX homolog (308 aa).

Transmembrane regions (helical) follow at residues 16 to 36 (LLSL…IYAV) and 39 to 59 (YLFG…VLMM). A Zn(2+)-binding site is contributed by His-149. Glu-150 is a catalytic residue. His-153 lines the Zn(2+) pocket. A run of 2 helical transmembrane segments spans residues 161–181 (VIMA…TTLF) and 192–212 (IILA…VLSV). Residue Glu-217 coordinates Zn(2+).

This sequence belongs to the peptidase M48B family. It depends on Zn(2+) as a cofactor.

It localises to the cell membrane. The polypeptide is Protease HtpX homolog (Thermoplasma volcanium (strain ATCC 51530 / DSM 4299 / JCM 9571 / NBRC 15438 / GSS1)).